Consider the following 145-residue polypeptide: Protein SprT-like (145 aa).

A SprT-like domain is found at 4–141 (TDYVKEVSRQ…CGNCHGKLRH (138 aa)). Histidine 64 lines the Zn(2+) pocket. Residue glutamate 65 is part of the active site. Histidine 68 serves as a coordination point for Zn(2+).

The protein belongs to the SprT family. Requires Zn(2+) as cofactor.

It is found in the cytoplasm. The protein is Protein SprT-like of Streptococcus mutans serotype c (strain ATCC 700610 / UA159).